We begin with the raw amino-acid sequence, 147 residues long: Neocarzinostatin (147 aa).

Positions 1–34 (MVPISIIRNRVAKVAVGSAAVLGLAVGFQTPAVA) are cleaved as a signal peptide. Intrachain disulfides connect cysteine 71-cysteine 81 and cysteine 122-cysteine 127.

The protein belongs to the neocarzinostatin family.

In terms of biological role, NCS has antibiotic activity (for Gram-positive bacteria) and antitumor activity (for certain mouse tumors). NCS binds non-covalently to a chromophore which is the cytotoxic and mutagenic component of the antibiotic. The chromophore binds to DNA as a weak intercalator and causes single- and double-strand breaks. This Streptomyces carzinostaticus protein is Neocarzinostatin (ncsA).